Consider the following 125-residue polypeptide: Small ribosomal subunit protein bS6m (125 aa).

This sequence belongs to the bacterial ribosomal protein bS6 family. Component of the mitochondrial ribosome small subunit (28S) which comprises a 12S rRNA and about 30 distinct proteins.

The protein localises to the mitochondrion. This chain is Small ribosomal subunit protein bS6m (Mrps6), found in Mus musculus (Mouse).